The primary structure comprises 461 residues: Spermidine coumaroyl-CoA acyltransferase (461 aa).

Residues H168 and D393 each act as proton acceptor in the active site.

It belongs to the plant acyltransferase family. Monomer. As to expression, mainly expressed in roots at low levels, specifically, in the root tip.

The enzyme catalyses 2 (E)-4-coumaroyl-CoA + spermidine = N(1),N(8)-bis(coumaroyl)-spermidine + 2 CoA + 2 H(+). It participates in amine and polyamine metabolism; spermidine metabolism. Spermidine coumaroyl-CoA acyltransferase that mediates the conversion of spermidine into dicoumaroyl-spermidine. This Arabidopsis thaliana (Mouse-ear cress) protein is Spermidine coumaroyl-CoA acyltransferase.